We begin with the raw amino-acid sequence, 203 residues long: uncharacterized protein (203 aa).

Positions Ser117–Ala138 are disordered. Positions Gln124–Ala138 are enriched in polar residues.

It is found in the cytoplasm. The protein resides in the nucleus. This is an uncharacterized protein from Schizosaccharomyces pombe (strain 972 / ATCC 24843) (Fission yeast).